The sequence spans 391 residues: uncharacterized protein (391 aa).

Residues 85-314 enclose the OBG-type G domain; that stretch reads ATAAFVGFPS…LKEKIYEKLG (230 aa). Residues 91–98, 137–141, and 267–270 each bind GTP; these read GFPSVGKS, DAPGI, and NKID. The TGS domain maps to 314–389; that stretch reads GFIKIYLKPQ…EDGDILTIVI (76 aa).

Belongs to the TRAFAC class OBG-HflX-like GTPase superfamily. OBG GTPase family.

This is an uncharacterized protein from Methanocaldococcus jannaschii (strain ATCC 43067 / DSM 2661 / JAL-1 / JCM 10045 / NBRC 100440) (Methanococcus jannaschii).